The sequence spans 216 residues: N-(5'-phosphoribosyl)anthranilate isomerase (216 aa).

This sequence belongs to the TrpF family.

It catalyses the reaction N-(5-phospho-beta-D-ribosyl)anthranilate = 1-(2-carboxyphenylamino)-1-deoxy-D-ribulose 5-phosphate. The protein operates within amino-acid biosynthesis; L-tryptophan biosynthesis; L-tryptophan from chorismate: step 3/5. The protein is N-(5'-phosphoribosyl)anthranilate isomerase of Leptospira borgpetersenii serovar Hardjo-bovis (strain JB197).